The chain runs to 101 residues: MAGQKIRIRLKAYDHEAIDASARKIVETVVRTGASVVGPVPLPTEKNVYCVVRSPHKYKDSREHFEMRTHKRLIDIIDPTPKTVDALMRIDLPASVDVNIQ.

The protein belongs to the universal ribosomal protein uS10 family. As to quaternary structure, part of the 30S ribosomal subunit.

Involved in the binding of tRNA to the ribosomes. The protein is Small ribosomal subunit protein uS10 of Mycobacterium ulcerans (strain Agy99).